The chain runs to 390 residues: Probable purine permease 7 (390 aa).

10 consecutive transmembrane segments (helical) span residues 42–62 (WLRV…ATIL), 74–94 (TYVV…FRFF), 110–130 (SPSF…VSAY), 131–151 (AYLS…LILA), 169–189 (FTPL…LLVV), 205–225 (VIGF…LSLI), 244–264 (LAIY…FASG), 286–306 (TLAS…GLIF), 312–332 (FSNS…VIVF), and 341–361 (IFSI…HYLD).

Belongs to the purine permeases (TC 2.A.7.14) family.

The protein localises to the membrane. The protein is Probable purine permease 7 (PUP7) of Arabidopsis thaliana (Mouse-ear cress).